We begin with the raw amino-acid sequence, 458 residues long: Ribulose bisphosphate carboxylase (458 aa).

Asn111 lines the substrate pocket. Residue Lys166 is the Proton acceptor of the active site. Position 168 (Lys168) interacts with substrate. Positions 191, 193, and 194 each coordinate Mg(2+). Position 191 is an N6-carboxylysine (Lys191). His287 serves as the catalytic Proton acceptor. 3 residues coordinate substrate: Arg288, His321, and Ser368.

The protein belongs to the RuBisCO large chain family. Type II subfamily. Homodimer. Mg(2+) serves as cofactor.

It catalyses the reaction 2 (2R)-3-phosphoglycerate + 2 H(+) = D-ribulose 1,5-bisphosphate + CO2 + H2O. The catalysed reaction is D-ribulose 1,5-bisphosphate + O2 = 2-phosphoglycolate + (2R)-3-phosphoglycerate + 2 H(+). Functionally, ruBisCO catalyzes two reactions: the carboxylation of D-ribulose 1,5-bisphosphate, the primary event in carbon dioxide fixation, as well as the oxidative fragmentation of the pentose substrate. Both reactions occur simultaneously and in competition at the same active site. This is Ribulose bisphosphate carboxylase (cbbM) from Rhodobacter capsulatus (Rhodopseudomonas capsulata).